The following is a 122-amino-acid chain: MTTFRFCRDCNNMLYPREDKEEQRLLFECRTCTYAEEAGTPLVYRHELITNIGETAGVVQDIGSDPTLPRSDRECPRCHSHDNVFFQSQQRRRDTSMVLFFVCLGCSHIFTSDQKNKRTTFS.

The Zn(2+) site is built by Cys7, Cys10, Cys29, Cys32, Cys75, Cys78, Cys103, and Cys106. A C4-type zinc finger spans residues Cys7 to Cys32. The segment at Ser71–Thr111 adopts a TFIIS-type zinc-finger fold.

This sequence belongs to the archaeal RpoM/eukaryotic RPA12/RPB9/RPC11 RNA polymerase family. Component of the RNA polymerase II (Pol II) complex consisting of 12 subunits.

The protein localises to the nucleus. It is found in the nucleolus. In terms of biological role, DNA-dependent RNA polymerase catalyzes the transcription of DNA into RNA using the four ribonucleoside triphosphates as substrates. Component of RNA polymerase II which synthesizes mRNA precursors and many functional non-coding RNAs. Pol II is the central component of the basal RNA polymerase II transcription machinery. It is composed of mobile elements that move relative to each other. RPB9 is part of the upper jaw surrounding the central large cleft and thought to grab the incoming DNA template. Involved in the regulation of transcription elongation. The protein is DNA-directed RNA polymerase II subunit RPB9 (RPB9) of Eremothecium gossypii (strain ATCC 10895 / CBS 109.51 / FGSC 9923 / NRRL Y-1056) (Yeast).